We begin with the raw amino-acid sequence, 515 residues long: ATP synthase subunit alpha (515 aa).

Position 169–176 (glycine 169–threonine 176) interacts with ATP.

Belongs to the ATPase alpha/beta chains family. As to quaternary structure, F-type ATPases have 2 components, CF(1) - the catalytic core - and CF(0) - the membrane proton channel. CF(1) has five subunits: alpha(3), beta(3), gamma(1), delta(1), epsilon(1). CF(0) has three main subunits: a(1), b(2) and c(9-12). The alpha and beta chains form an alternating ring which encloses part of the gamma chain. CF(1) is attached to CF(0) by a central stalk formed by the gamma and epsilon chains, while a peripheral stalk is formed by the delta and b chains.

The protein resides in the cell inner membrane. It catalyses the reaction ATP + H2O + 4 H(+)(in) = ADP + phosphate + 5 H(+)(out). Functionally, produces ATP from ADP in the presence of a proton gradient across the membrane. The alpha chain is a regulatory subunit. This Myxococcus xanthus protein is ATP synthase subunit alpha.